We begin with the raw amino-acid sequence, 385 residues long: Glycine/sarcosine/betaine reductase complex component C subunit alpha (385 aa).

Residue cysteine 359 is part of the active site.

In terms of assembly, heterooctamer of four alpha and four beta subunits. Component of the glycine, sarcosine and betaine reductase complexes, together with proteins A and B.

The enzyme catalyses acetyl phosphate + [thioredoxin]-disulfide + NH4(+) + H2O = [thioredoxin]-dithiol + glycine + phosphate + H(+). It catalyses the reaction acetyl phosphate + methylamine + [thioredoxin]-disulfide + H2O = sarcosine + [thioredoxin]-dithiol + phosphate + H(+). It carries out the reaction acetyl phosphate + trimethylamine + [thioredoxin]-disulfide + H2O = glycine betaine + [thioredoxin]-dithiol + phosphate + H(+). Functionally, in the first step of glycine, betaine and sarcosine reductases, the substrate is bound to component PB via a Schiff base intermediate. Then the PB-activated substrate is nucleophilically attacked by the selenol anion of component PA to transform it to a carboxymethylated selenoether and the respective amine. By action of component PC, acetyl phosphate is formed, leaving component PA in its oxidized state. Finally component PA becomes reduced by the thioredoxin system to start a new catalytic cycle of reductive deamination. This Peptoclostridium acidaminophilum (Eubacterium acidaminophilum) protein is Glycine/sarcosine/betaine reductase complex component C subunit alpha (grdD).